Consider the following 506-residue polypeptide: Sodium-coupled neutral amino acid symporter 2 (506 aa).

The tract at residues 1–23 (MKKAEMGRFNISPDEDSSSYSSN) is disordered. Residues 1 to 76 (MKKAEMGRFN…HPGTTSFGMS (76 aa)) lie on the Cytoplasmic side of the membrane. Residues 1–96 (MKKAEMGRFN…SGILGLSYAM (96 aa)) are regulates protein turnover upon amino acid deprivation. Residues Ser12, Ser21, Ser22, and Ser55 each carry the phosphoserine modification. A helical transmembrane segment spans residues 77-96 (VFNLSNAIVGSGILGLSYAM). Residue Asn82 coordinates Na(+). At 97–102 (ANTGIA) the chain is on the extracellular side. A helical transmembrane segment spans residues 103–123 (LFIILLTFVSIFSLYSVHLLL). At 124 to 158 (KTANEGGSLLYEQLGYKAFGLVGKLAASGSITMQN) the chain is on the cytoplasmic side. The helical transmembrane segment at 159-177 (IGAMSSYLFIVKYELPLVI) threads the bilayer. Topologically, residues 178 to 188 (QALTNIEDKTG) are extracellular. The helical transmembrane segment at 189 to 209 (LWYLNGNYLVLLVSLVVILPL) threads the bilayer. The Cytoplasmic segment spans residues 210–217 (SLFRNLGY). Residues 218–238 (LGYTSGLSLLCMVFFLIVVIC) traverse the membrane as a helical segment. The Extracellular segment spans residues 239 to 292 (KKFQVPCPVEAALIINETINTTLTQPTALVPALSHNVTENDSCRPHYFIFNSQT). Residues Cys245 and Cys281 are joined by a disulfide bond. Residues Asn258 and Asn274 are each glycosylated (N-linked (GlcNAc...) asparagine). The helical transmembrane segment at 293-313 (VYAVPILIFSFVCHPAVLPIY) threads the bilayer. Topologically, residues 314–329 (EELKDRSRRRMMNVSK) are cytoplasmic. Residues 330–350 (ISFFAMFLMYLLAALFGYLTF) traverse the membrane as a helical segment. At 351 to 371 (YEHVESELLHTYSSILGTDIL) the chain is on the extracellular side. The chain crosses the membrane as a helical span at residues 372 to 392 (LLIVRLAVLMAVTLTVPVVIF). Thr386 provides a ligand contact to Na(+). At 393 to 413 (PIRSSVTHLLCASKDFSWWRH) the chain is on the cytoplasmic side. The helical transmembrane segment at 414–434 (SLITVSILAFTNLLVIFVPTI) threads the bilayer. Over 435–436 (RD) the chain is Extracellular. Residues 437 to 457 (IFGFIGASAASMLIFILPSAF) form a helical membrane-spanning segment. Residues 458–472 (YIKLVKKEPMKSVQK) are Cytoplasmic-facing. The helical transmembrane segment at 473 to 495 (IGALFFLLSGVLVMTGSMALIVL) threads the bilayer. Over 496 to 506 (DWVHNAPGGGH) the chain is Extracellular.

It belongs to the amino acid/polyamine transporter 2 family. In terms of processing, polyubiquitination by NEDD4L regulates the degradation and the activity of SLC38A2.

The protein localises to the cell membrane. It carries out the reaction L-alanine(in) + Na(+)(in) = L-alanine(out) + Na(+)(out). It catalyses the reaction glycine(in) + Na(+)(in) = glycine(out) + Na(+)(out). The enzyme catalyses L-serine(in) + Na(+)(in) = L-serine(out) + Na(+)(out). The catalysed reaction is L-proline(in) + Na(+)(in) = L-proline(out) + Na(+)(out). It carries out the reaction L-methionine(in) + Na(+)(in) = L-methionine(out) + Na(+)(out). It catalyses the reaction L-histidine(in) + Na(+)(in) = L-histidine(out) + Na(+)(out). The enzyme catalyses L-asparagine(in) + Na(+)(in) = L-asparagine(out) + Na(+)(out). The catalysed reaction is L-glutamine(in) + Na(+)(in) = L-glutamine(out) + Na(+)(out). It carries out the reaction L-threonine(in) + Na(+)(in) = L-threonine(out) + Na(+)(out). It catalyses the reaction L-leucine(in) + Na(+)(in) = L-leucine(out) + Na(+)(out). The enzyme catalyses L-phenylalanine(in) + Na(+)(in) = L-phenylalanine(out) + Na(+)(out). Inhibited by N-methyl-D-glucamine. Inhibited by choline. Allosteric regulation of sodium ions binding by pH. Symporter that cotransports neutral amino acids and sodium ions from the extracellular to the intracellular side of the cell membrane. The transport is pH-sensitive, Li(+)-intolerant, electrogenic, driven by the Na(+) electrochemical gradient and cotransports of neutral amino acids and sodium ions with a stoichiometry of 1:1. May function in the transport of amino acids at the blood-brain barrier. May function in the transport of amino acids in the supply of maternal nutrients to the fetus through the placenta. Maintains a key metabolic glutamine/glutamate balance underpinning retrograde signaling by dendritic release of the neurotransmitter glutamate. Transports L-proline in differentiating osteoblasts for the efficient synthesis of proline-enriched proteins and provides proline essential for osteoblast differentiation and bone formation during bone development. In Pan paniscus (Pygmy chimpanzee), this protein is Sodium-coupled neutral amino acid symporter 2.